A 97-amino-acid chain; its full sequence is Early nodulin-75 (97 aa).

The tract at residues 1–97 is disordered; the sequence is RPHVHPPPEH…PEYQPPHEKP (97 aa). 2 stretches are compositionally biased toward pro residues: residues 9 to 22 and 31 to 43; these read EHQP…PEYQ and VHPP…PYQK. Residues 76–97 are compositionally biased toward basic and acidic residues; that stretch reads PPHEKPPHEHPPPEYQPPHEKP.

This sequence belongs to the nodulin 75 family.

In terms of biological role, involved in early stages of root nodule development. This chain is Early nodulin-75 (ENOD2), found in Medicago sativa (Alfalfa).